Here is a 581-residue protein sequence, read N- to C-terminus: Multicopper oxidase LPR1 (581 aa).

Positions 1 to 28 are cleaved as a signal peptide; that stretch reads MESLLCRRRIKRVMVLIIALTWLRSTCG. 4 residues coordinate Cu cation: His-148, His-150, His-196, and His-198. Residues Asn-254, Asn-298, Asn-386, and Asn-458 are each glycosylated (N-linked (GlcNAc...) asparagine). Residues 283-352 form the Plastocyanin-like domain; sequence PRLNVRRRKY…DVVVDFYKSP (70 aa). Positions 464, 467, and 469 each coordinate Cu cation. N-linked (GlcNAc...) asparagine glycosylation is present at Asn-546. Positions 562, 563, 564, 568, and 573 each coordinate Cu cation.

This sequence belongs to the multicopper oxidase family. Cu cation serves as cofactor.

The protein resides in the endoplasmic reticulum membrane. Its function is as follows. Multicopper oxidase that may be involved in copper homeostasis and oxidative stress response, and that is necessary for root growth inhibition by low phosphate conditions. Functions together with LPR2 and PDR2 in a common pathway that adjusts root meristem activity to phosphate availability. Oxidizes the substrate 2,2'-azinobis-(3-ethylbenzthiazoline-6-sulphonate) in vitro. The chain is Multicopper oxidase LPR1 (LPR1) from Arabidopsis thaliana (Mouse-ear cress).